Reading from the N-terminus, the 39-residue chain is Cytochrome b559 subunit beta (39 aa).

A helical membrane pass occupies residues 14 to 30 (WLAVHGLAVPTVFFLGS). Heme is bound at residue histidine 18.

The protein belongs to the PsbE/PsbF family. Heterodimer of an alpha subunit and a beta subunit. PSII is composed of 1 copy each of membrane proteins PsbA, PsbB, PsbC, PsbD, PsbE, PsbF, PsbH, PsbI, PsbJ, PsbK, PsbL, PsbM, PsbT, PsbX, PsbY, PsbZ, Psb30/Ycf12, at least 3 peripheral proteins of the oxygen-evolving complex and a large number of cofactors. It forms dimeric complexes. Heme b serves as cofactor.

Its subcellular location is the plastid. The protein localises to the chloroplast thylakoid membrane. Its function is as follows. This b-type cytochrome is tightly associated with the reaction center of photosystem II (PSII). PSII is a light-driven water:plastoquinone oxidoreductase that uses light energy to abstract electrons from H(2)O, generating O(2) and a proton gradient subsequently used for ATP formation. It consists of a core antenna complex that captures photons, and an electron transfer chain that converts photonic excitation into a charge separation. This is Cytochrome b559 subunit beta from Adiantum capillus-veneris (Maidenhair fern).